Consider the following 92-residue polypeptide: UPF0250 protein VV0902 (92 aa).

Belongs to the UPF0250 family.

In Vibrio vulnificus (strain YJ016), this protein is UPF0250 protein VV0902.